A 302-amino-acid polypeptide reads, in one-letter code: Probable protein S-acyltransferase 13 (302 aa).

Helical transmembrane passes span 17 to 37 and 56 to 76; these read SIMI…VVVV and VLAF…SVVV. Positions 116-166 constitute a DHHC domain; that stretch reads RYCRKCNQYKPPRSHHCSVCGRCILKMDHHCVWVVNCVGANNYKSFLLFLF. The active-site S-palmitoyl cysteine intermediate is Cys-146. 2 consecutive transmembrane segments (helical) span residues 166–186 and 204–224; these read FYTF…FLVF and SFVA…FLIM.

The protein belongs to the DHHC palmitoyltransferase family.

It localises to the cell membrane. It is found in the cytoplasmic vesicle membrane. The enzyme catalyses L-cysteinyl-[protein] + hexadecanoyl-CoA = S-hexadecanoyl-L-cysteinyl-[protein] + CoA. Palmitoyl acyltransferase. The polypeptide is Probable protein S-acyltransferase 13 (PAT13) (Arabidopsis thaliana (Mouse-ear cress)).